The primary structure comprises 619 residues: Lateral signaling target protein 2 homolog (619 aa).

Residues Asp501 to Ile561 form an FYVE-type zinc finger. 8 residues coordinate Zn(2+): Cys507, Cys510, Cys523, Cys526, Cys531, Cys534, Cys553, and Cys556. The interval His598–Ile619 is disordered. The span at Asp603–Ile619 shows a compositional bias: polar residues.

Belongs to the lst-2 family.

In terms of biological role, negative regulator of epidermal growth factor receptor (EGFR) signaling. The sequence is that of Lateral signaling target protein 2 homolog from Brugia malayi (Filarial nematode worm).